We begin with the raw amino-acid sequence, 129 residues long: Large ribosomal subunit protein bL19 (129 aa).

This sequence belongs to the bacterial ribosomal protein bL19 family.

Functionally, this protein is located at the 30S-50S ribosomal subunit interface and may play a role in the structure and function of the aminoacyl-tRNA binding site. This is Large ribosomal subunit protein bL19 from Paraburkholderia phytofirmans (strain DSM 17436 / LMG 22146 / PsJN) (Burkholderia phytofirmans).